The chain runs to 299 residues: NmrA-like family domain-containing protein 1 (299 aa).

NADP(+)-binding positions include 11–16, 37–41, 58–59, 79–81, Lys92, Lys133, and 155–158; these read GATGAQ, RDPGQ, DQ, TNY, and YFEN. The tract at residues 153–189 is interaction with ASS1; it reads PCYFENLLSYFLPQKAPDGRSYLLSLPMGDVPIDGMS.

Belongs to the NmrA-type oxidoreductase family. Homodimer. Interacts with ASS1. Interaction is enhanced by low NADPH/NADP(+) ratios, which results in inhibition of ASS1 activity.

It localises to the cytoplasm. Its subcellular location is the perinuclear region. The protein localises to the nucleus. Redox sensor protein. Undergoes restructuring and subcellular redistribution in response to changes in intracellular NADPH/NADP(+) levels. At low NADPH concentrations the protein is found mainly as a monomer, and binds argininosuccinate synthase (ASS1), the enzyme involved in nitric oxide synthesis. Association with ASS1 impairs its activity and reduces the production of nitric oxide, which subsecuently prevents apoptosis. Under normal NADPH concentrations, the protein is found as a dimer and hides the binding site for ASS1. The homodimer binds one molecule of NADPH. Has higher affinity for NADPH than for NADP(+). Binding to NADPH is necessary to form a stable dimer. The chain is NmrA-like family domain-containing protein 1 (NMRAL1) from Bos taurus (Bovine).